The chain runs to 110 residues: Small ribosomal subunit protein bS18c (110 aa).

The protein belongs to the bacterial ribosomal protein bS18 family. In terms of assembly, part of the 30S ribosomal subunit.

It is found in the plastid. The protein localises to the chloroplast. This is Small ribosomal subunit protein bS18c (rps18) from Pisum sativum (Garden pea).